A 500-amino-acid chain; its full sequence is MSDLKTESQDLQQEENALIALRKEKLAAERAKGNAFPNDFRRDSYCNDLQKQYADKTKEELEAAAIPVKVAGRIMLNRGSFMVIQDMTGRIQVYVNRKTLPEETLAAVKTWDLGDIISAEGTLARSGKGDLYVEMTNVRLLTKSLRPLPDKHHGLTDTEQRYRQRYVDLMVNEETRHTFRVRSQVISHIRKFLIERDFLEVETPMLQTIPGGAAAKPFETHHNALDMAMFLRIAPELYLKRLVVGGFEKVFEINRNFRNEGVSTRHNPEFTMLEFYQAYADYRDNMDLTEELFRELAQLVLGSTDVPYGDKVFHFGEPFVRLSVFDSILKYNPELTAADLQDVDRAREIAKKAGAKVLGHEGLGKLQVMIFEELVEHKLEQPHFITEYPFEVSPLARRNDDNPAVTDRFELFIGGREIANAYSELNDAEDQAERFLAQVAEKDAGDDEAMHYDADFVRALEYGMPPTAGEGIGIDRLVMLLTNSPSIRDVILFPHMRPQA.

Positions 410 and 417 each coordinate Mg(2+).

It belongs to the class-II aminoacyl-tRNA synthetase family. As to quaternary structure, homodimer. Mg(2+) serves as cofactor.

The protein localises to the cytoplasm. The catalysed reaction is tRNA(Lys) + L-lysine + ATP = L-lysyl-tRNA(Lys) + AMP + diphosphate. In Pseudomonas putida (strain ATCC 700007 / DSM 6899 / JCM 31910 / BCRC 17059 / LMG 24140 / F1), this protein is Lysine--tRNA ligase.